The primary structure comprises 507 residues: ATP synthase subunit alpha, chloroplastic (507 aa).

170–177 lines the ATP pocket; that stretch reads GDRQTGKT.

Belongs to the ATPase alpha/beta chains family. As to quaternary structure, F-type ATPases have 2 components, CF(1) - the catalytic core - and CF(0) - the membrane proton channel. CF(1) has five subunits: alpha(3), beta(3), gamma(1), delta(1), epsilon(1). CF(0) has four main subunits: a, b, b' and c.

It localises to the plastid. The protein resides in the chloroplast thylakoid membrane. The enzyme catalyses ATP + H2O + 4 H(+)(in) = ADP + phosphate + 5 H(+)(out). Functionally, produces ATP from ADP in the presence of a proton gradient across the membrane. The alpha chain is a regulatory subunit. The chain is ATP synthase subunit alpha, chloroplastic from Pelargonium hortorum (Common geranium).